A 399-amino-acid polypeptide reads, in one-letter code: Probable F-box protein At4g22060 (399 aa).

The F-box domain maps to 12-48 (SWSKLPLDLLIMVFERLGFVDFQRTKSVCLAWLYASR).

This is Probable F-box protein At4g22060 from Arabidopsis thaliana (Mouse-ear cress).